We begin with the raw amino-acid sequence, 72 residues long: Translation initiation factor IF-1 (72 aa).

Residues 1 to 72 (MAKEESIKMN…SKGRITYRAR (72 aa)) form the S1-like domain.

It belongs to the IF-1 family. As to quaternary structure, component of the 30S ribosomal translation pre-initiation complex which assembles on the 30S ribosome in the order IF-2 and IF-3, IF-1 and N-formylmethionyl-tRNA(fMet); mRNA recruitment can occur at any time during PIC assembly.

It localises to the cytoplasm. In terms of biological role, one of the essential components for the initiation of protein synthesis. Stabilizes the binding of IF-2 and IF-3 on the 30S subunit to which N-formylmethionyl-tRNA(fMet) subsequently binds. Helps modulate mRNA selection, yielding the 30S pre-initiation complex (PIC). Upon addition of the 50S ribosomal subunit IF-1, IF-2 and IF-3 are released leaving the mature 70S translation initiation complex. This Alkalilimnicola ehrlichii (strain ATCC BAA-1101 / DSM 17681 / MLHE-1) protein is Translation initiation factor IF-1.